The sequence spans 475 residues: Ribulose bisphosphate carboxylase large chain (475 aa).

The propeptide occupies 1-2 (MS). N-acetylproline is present on P3. K14 is modified (N6,N6,N6-trimethyllysine). N123 and T173 together coordinate substrate. The active-site Proton acceptor is the K175. K177 is a substrate binding site. Residues K201, D203, and E204 each contribute to the Mg(2+) site. K201 bears the N6-carboxylysine mark. H294 serves as the catalytic Proton acceptor. R295, H327, and S379 together coordinate substrate.

The protein belongs to the RuBisCO large chain family. Type I subfamily. In terms of assembly, heterohexadecamer of 8 large chains and 8 small chains; disulfide-linked. The disulfide link is formed within the large subunit homodimers. It depends on Mg(2+) as a cofactor. In terms of processing, the disulfide bond which can form in the large chain dimeric partners within the hexadecamer appears to be associated with oxidative stress and protein turnover.

It localises to the plastid. It is found in the chloroplast. It catalyses the reaction 2 (2R)-3-phosphoglycerate + 2 H(+) = D-ribulose 1,5-bisphosphate + CO2 + H2O. The enzyme catalyses D-ribulose 1,5-bisphosphate + O2 = 2-phosphoglycolate + (2R)-3-phosphoglycerate + 2 H(+). RuBisCO catalyzes two reactions: the carboxylation of D-ribulose 1,5-bisphosphate, the primary event in carbon dioxide fixation, as well as the oxidative fragmentation of the pentose substrate in the photorespiration process. Both reactions occur simultaneously and in competition at the same active site. The polypeptide is Ribulose bisphosphate carboxylase large chain (Clarkia xantiana (Gunsight clarkia)).